A 344-amino-acid chain; its full sequence is Membrane progestin receptor delta (344 aa).

The Cytoplasmic segment spans residues 1-51 (MLSLKLPQLLQVHQVPRVFWEDGIMSGYRRPTSSALDCVLSSFQMTNETVN). A helical transmembrane segment spans residues 52–72 (IWTHFLPTWYFLWRLLALAGG). Topologically, residues 73 to 83 (PGFRAEPYHWP) are extracellular. The chain crosses the membrane as a helical span at residues 84 to 104 (LLVFLLPACLYPFASCCAHTF). The Cytoplasmic segment spans residues 105–113 (SSMSPRMRH). Residues 114 to 134 (ICYFLDYGALSLYSLGCAFPY) traverse the membrane as a helical segment. At 135–147 (AAYSMPASWLHGH) the chain is on the extracellular side. A helical membrane pass occupies residues 148 to 168 (LHQFFVPAAALNSFLCTGLSC). Residues 169–217 (YSRFLELESPGLSKVLRTGAFAYPFLFDNLPLFYRLGLCWGRGHGCGQE) are Cytoplasmic-facing. Residues 218 to 238 (ALSTSHGYHLFCALLTGFLFA) form a helical membrane-spanning segment. At 239 to 258 (SHLPERLAPGRFDYIGHSHQ) the chain is on the extracellular side. The chain crosses the membrane as a helical span at residues 259-279 (LFHICAVLGTHFQLEAVLADM). The Cytoplasmic portion of the chain corresponds to 280–292 (GSRRAWLATQEPA). Residues 293-313 (LGLAGTVATLVLAAAGNLLII) traverse the membrane as a helical segment. Residues 314–344 (AAFTATLLRAPSTCPLLQGGPLEGGTQAKQQ) are Extracellular-facing.

Belongs to the ADIPOR family. In terms of assembly, homodimer. As to expression, brain specific. Highly expressed in the hypothalamus, also expressed in forebrain, amygdala, corpus callosum and spinal cord.

Its subcellular location is the cell membrane. Functionally, plasma membrane progesterone (P4) receptor coupled to G proteins. Seems to act through a G(s) mediated pathway. Involved in neurosteroid inhibition of apoptosis. May be involved in regulating rapid P4 signaling in the nervous system. Also binds dehydroepiandrosterone (DHEA), pregnanolone, pregnenolone and allopregnanolone. This Homo sapiens (Human) protein is Membrane progestin receptor delta.